A 599-amino-acid polypeptide reads, in one-letter code: Elongation factor 4 (599 aa).

One can recognise a tr-type G domain in the interval 2-184 (KNIRNFSIIA…RLVRDIPPPE (183 aa)). GTP contacts are provided by residues 14 to 19 (DHGKST) and 131 to 134 (NKID).

It belongs to the TRAFAC class translation factor GTPase superfamily. Classic translation factor GTPase family. LepA subfamily.

The protein localises to the cell inner membrane. The catalysed reaction is GTP + H2O = GDP + phosphate + H(+). Functionally, required for accurate and efficient protein synthesis under certain stress conditions. May act as a fidelity factor of the translation reaction, by catalyzing a one-codon backward translocation of tRNAs on improperly translocated ribosomes. Back-translocation proceeds from a post-translocation (POST) complex to a pre-translocation (PRE) complex, thus giving elongation factor G a second chance to translocate the tRNAs correctly. Binds to ribosomes in a GTP-dependent manner. In Escherichia fergusonii (strain ATCC 35469 / DSM 13698 / CCUG 18766 / IAM 14443 / JCM 21226 / LMG 7866 / NBRC 102419 / NCTC 12128 / CDC 0568-73), this protein is Elongation factor 4.